The primary structure comprises 593 residues: Vitamin H transporter (593 aa).

The Extracellular segment spans residues 1 to 121 (MTISNKSWRS…TTQTKAERRL (121 aa)). Ser32, Ser33, and Ser43 each carry phosphoserine. The helical transmembrane segment at 122–142 (LYKLDIIIALYFFMLCWSKSV) threads the bilayer. Over 143-166 (DLNNYTNAYVSNMKEDLNMKGNDY) the chain is Cytoplasmic. Residues 167-187 (VYTSTIANVGAIVFQLPFMYL) form a helical membrane-spanning segment. Residues 188 to 190 (LPR) are Extracellular-facing. Residues 191 to 211 (FPSHIILPVMDLGWTWFTFAC) traverse the membrane as a helical segment. Residues 212-224 (YRANSLAELRAYR) lie on the Cytoplasmic side of the membrane. The chain crosses the membrane as a helical span at residues 225-245 (FILSAFGAAYYPVSQYILGCW). Residues 246–291 (YAPDEINSRVCLFFCGQQLGSVTSGLLQSRIFKSLNGVHGLAGWRW) are Extracellular-facing. The helical transmembrane segment at 292 to 312 (MFLIDAIAISLPTAIIGFFVI) threads the bilayer. Topologically, residues 313-361 (PGVPSKCYSLFLTDEEIRIARARNKRNQIKDGVDKSKLAPLWSRKLWKK) are cytoplasmic. Residues 362 to 382 (VFCTPAFWVLVVFDTCSWNNM) traverse the membrane as a helical segment. At 383–408 (TAYSGSYTLWLKSNTKYSIAQVNNLS) the chain is on the extracellular side. The chain crosses the membrane as a helical span at residues 409–429 (VIPACLGFAYVIFCAFGADLF). Residues 430–432 (RCK) are Cytoplasmic-facing. Residues 433-453 (WIFMVFAAIMNTVSCALLIKW) form a helical membrane-spanning segment. The Extracellular portion of the chain corresponds to 454–460 (DIPSKAK). A helical transmembrane segment spans residues 461–481 (WYAFFTTYFSVAASPCLWSFI). At 482-492 (NDFLRFDPQVK) the chain is on the cytoplasmic side. Residues 493–513 (AITWIAIYSFSQSTYAWIPTL) traverse the membrane as a helical segment. At 514-526 (AWPTVESPRFKTG) the chain is on the extracellular side. A helical membrane pass occupies residues 527–547 (YTVSLIFGAIYGLWTFVVLFF). Over 548–593 (YKRNEKKHALGNGIILYDSNKGEELPEFVKKNMEERDGYYYLKRSS) the chain is Cytoplasmic.

The protein belongs to the major facilitator superfamily. Allantoate permease family.

The protein localises to the cell membrane. Involved in uptake of biotin with the concomitant entry of protons. The protein is Vitamin H transporter (VHT1) of Saccharomyces cerevisiae (strain ATCC 204508 / S288c) (Baker's yeast).